Consider the following 278-residue polypeptide: PILR alpha-associated neural protein (278 aa).

The N-terminal stretch at 1 to 27 (MWSAQLLSQLLPLWPLLLLSVLPPAQG) is a signal peptide. The tract at residues 25 to 93 (AQGSSHRSPP…PSGFEEGPPS (69 aa)) is disordered. Over 28-174 (SSHRSPPAPA…FGGRGEGVDP (147 aa)) the chain is Extracellular. O-linked (GalNAc...) threonine glycosylation occurs at threonine 136. The chain crosses the membrane as a helical span at residues 175–195 (QLYVTITISIIIVLVATGIIF). The Cytoplasmic segment spans residues 196–278 (KFCWDRSQKR…QLNRIPLVNL (83 aa)). Residues 206–278 (RRPSGQQGAL…QLNRIPLVNL (73 aa)) are disordered. Residues 209–225 (SGQQGALRQEESQQPLT) show a composition bias toward polar residues.

Post-translationally, O-glycosylation at Thr-136 is essential for recognition by PILRA. In terms of tissue distribution, mainly expressed in brain and spinal cord. Weak expression also detected in heart, kidney, spleen and lymph node. Virtually no expression detected in liver and embryo relative to brain.

The protein resides in the membrane. Acts as a ligand for PILRA in neuronal tissues, where it may be involved in immune regulation. This Mus musculus (Mouse) protein is PILR alpha-associated neural protein (Pianp).